A 263-amino-acid chain; its full sequence is Chymotrypsinogen B (263 aa).

Positions 1–18 (MAFLWLVSCFALVGATFG) are cleaved as a signal peptide. Cystine bridges form between Cys-19-Cys-140, Cys-60-Cys-76, Cys-154-Cys-219, Cys-186-Cys-200, and Cys-209-Cys-238. In terms of domain architecture, Peptidase S1 spans 34–261 (IVNGEDAIPG…LMPWVQQILE (228 aa)). His-75 acts as the Charge relay system in catalysis. Ser-93 carries the phosphoserine modification. The active-site Charge relay system is Asp-120. The Charge relay system role is filled by Ser-213.

It belongs to the peptidase S1 family.

It localises to the secreted. It is found in the extracellular space. The enzyme catalyses Preferential cleavage: Tyr-|-Xaa, Trp-|-Xaa, Phe-|-Xaa, Leu-|-Xaa.. The chain is Chymotrypsinogen B (Ctrb1) from Rattus norvegicus (Rat).